We begin with the raw amino-acid sequence, 475 residues long: Ribulose bisphosphate carboxylase large chain (475 aa).

Positions 1–2 (MS) are excised as a propeptide. Pro-3 is modified (N-acetylproline). The residue at position 14 (Lys-14) is an N6,N6,N6-trimethyllysine. Substrate is bound by residues Asn-123 and Thr-173. Lys-175 (proton acceptor) is an active-site residue. Lys-177 serves as a coordination point for substrate. Positions 201, 203, and 204 each coordinate Mg(2+). An N6-carboxylysine modification is found at Lys-201. Catalysis depends on His-294, which acts as the Proton acceptor. Substrate is bound by residues Arg-295, His-327, and Ser-379.

The protein belongs to the RuBisCO large chain family. Type I subfamily. As to quaternary structure, heterohexadecamer of 8 large chains and 8 small chains. The cofactor is Mg(2+).

The protein localises to the plastid. It is found in the chloroplast. It catalyses the reaction 2 (2R)-3-phosphoglycerate + 2 H(+) = D-ribulose 1,5-bisphosphate + CO2 + H2O. The enzyme catalyses D-ribulose 1,5-bisphosphate + O2 = 2-phosphoglycolate + (2R)-3-phosphoglycerate + 2 H(+). In terms of biological role, ruBisCO catalyzes two reactions: the carboxylation of D-ribulose 1,5-bisphosphate, the primary event in carbon dioxide fixation, as well as the oxidative fragmentation of the pentose substrate in the photorespiration process. Both reactions occur simultaneously and in competition at the same active site. The protein is Ribulose bisphosphate carboxylase large chain of Nymphaea alba (White water-lily).